Reading from the N-terminus, the 174-residue chain is Crossover junction endodeoxyribonuclease RuvC (174 aa).

Active-site residues include aspartate 8, glutamate 67, and aspartate 139. Residues aspartate 8, glutamate 67, and aspartate 139 each coordinate Mg(2+).

This sequence belongs to the RuvC family. Homodimer which binds Holliday junction (HJ) DNA. The HJ becomes 2-fold symmetrical on binding to RuvC with unstacked arms; it has a different conformation from HJ DNA in complex with RuvA. In the full resolvosome a probable DNA-RuvA(4)-RuvB(12)-RuvC(2) complex forms which resolves the HJ. Mg(2+) is required as a cofactor.

It localises to the cytoplasm. It catalyses the reaction Endonucleolytic cleavage at a junction such as a reciprocal single-stranded crossover between two homologous DNA duplexes (Holliday junction).. Functionally, the RuvA-RuvB-RuvC complex processes Holliday junction (HJ) DNA during genetic recombination and DNA repair. Endonuclease that resolves HJ intermediates. Cleaves cruciform DNA by making single-stranded nicks across the HJ at symmetrical positions within the homologous arms, yielding a 5'-phosphate and a 3'-hydroxyl group; requires a central core of homology in the junction. The consensus cleavage sequence is 5'-(A/T)TT(C/G)-3'. Cleavage occurs on the 3'-side of the TT dinucleotide at the point of strand exchange. HJ branch migration catalyzed by RuvA-RuvB allows RuvC to scan DNA until it finds its consensus sequence, where it cleaves and resolves the cruciform DNA. The sequence is that of Crossover junction endodeoxyribonuclease RuvC from Ectopseudomonas mendocina (strain ymp) (Pseudomonas mendocina).